Consider the following 246-residue polypeptide: MLQNIRIVLVETSHTGNMGSVARAMKTMGLTNLWLVNPLVKPDSQAIALAAGASDVIGNAHIVDTLDEALAGCSLVVGTSARSRTLPWPMLDPRECGLKSVAEAANTPVALVFGRERVGLTNEELQKCHYHVAIAANPEYSSLNLAMAVQVIAYEVRMAWLATQENGEQVEHEETPYPLVDDLERFYGHLEQTLLATGFIRENHPGQVMNKLRRLFTRARPESQELNILRGILASIEQQNKGNKAE.

Residues 79–81 (TSA), G114, I134, and 141–143 (SSL) each bind S-adenosyl-L-methionine.

Belongs to the class IV-like SAM-binding methyltransferase superfamily. RNA methyltransferase TrmH family. As to quaternary structure, homodimer.

The protein resides in the cytoplasm. The enzyme catalyses cytidine(32) in tRNA + S-adenosyl-L-methionine = 2'-O-methylcytidine(32) in tRNA + S-adenosyl-L-homocysteine + H(+). It catalyses the reaction uridine(32) in tRNA + S-adenosyl-L-methionine = 2'-O-methyluridine(32) in tRNA + S-adenosyl-L-homocysteine + H(+). In terms of biological role, catalyzes the formation of 2'O-methylated cytidine (Cm32) or 2'O-methylated uridine (Um32) at position 32 in tRNA. The protein is tRNA (cytidine/uridine-2'-O-)-methyltransferase TrmJ (trmJ) of Escherichia coli O1:K1 / APEC.